We begin with the raw amino-acid sequence, 190 residues long: MILPITTYTDEVLHQTAKPLKGVDGAVEELIDSMFESMENASGIGLAAPQVGHSLRLLVLDISCMKSYEDVAPMVVINPHILSVKGKNLMEEGCLSVPGVQGDVQRPSSITLKYRDRNFLEQTEEFSGMLARVLQHEIDHLSGTLFIDRMEKRDRRKIQKELDDIAKGNIEVDYPLARACSRDGGGAICM.

Fe cation-binding residues include C94 and H136. E137 is an active-site residue. H140 lines the Fe cation pocket.

Belongs to the polypeptide deformylase family. Requires Fe(2+) as cofactor.

The enzyme catalyses N-terminal N-formyl-L-methionyl-[peptide] + H2O = N-terminal L-methionyl-[peptide] + formate. Functionally, removes the formyl group from the N-terminal Met of newly synthesized proteins. Requires at least a dipeptide for an efficient rate of reaction. N-terminal L-methionine is a prerequisite for activity but the enzyme has broad specificity at other positions. This is Peptide deformylase from Chlorobium phaeovibrioides (strain DSM 265 / 1930) (Prosthecochloris vibrioformis (strain DSM 265)).